Reading from the N-terminus, the 141-residue chain is Hemoglobin subunit alpha (141 aa).

The Globin domain maps to 1–141; sequence VLSSDDKCNV…VSSVLTSKYR (141 aa). Residue His58 coordinates O2. His87 is a binding site for heme b.

The protein belongs to the globin family. As to quaternary structure, heterotetramer of two alpha chains and two beta chains. Red blood cells.

In terms of biological role, involved in oxygen transport from the lung to the various peripheral tissues. The polypeptide is Hemoglobin subunit alpha (HBA) (Crocodylus niloticus (Nile crocodile)).